Consider the following 115-residue polypeptide: U3-lycotoxin-Ls1k (115 aa).

An N-terminal signal peptide occupies residues 1–20; that stretch reads MKFVLLFGVLLVTLFSYSSA. The propeptide occupies 21-44; it reads EMLDDFDQADEDELLSLIEKEEAR. 4 disulfide bridges follow: Cys48-Cys63, Cys55-Cys72, Cys62-Cys87, and Cys74-Cys85.

This sequence belongs to the neurotoxin 19 (CSTX) family. 01 subfamily. As to expression, expressed by the venom gland.

It localises to the secreted. The chain is U3-lycotoxin-Ls1k from Lycosa singoriensis (Wolf spider).